The following is a 114-amino-acid chain: U17-barytoxin-Tl1a (114 aa).

The first 20 residues, 1–20 (MKTIIVFLSLLVLATKFGDA), serve as a signal peptide directing secretion. Positions 21 to 74 (NEGVNQEQMKEVIQNEFREDFLNEMAAMSLLQQLEAIESTLLEKEADRNSRQKR) are excised as a propeptide. Cystine bridges form between C75/C88, C82/C93, and C87/C108.

This sequence belongs to the neurotoxin 14 (magi-1) family. 03 (ICK-30-40) subfamily. As to expression, expressed by the venom gland.

It localises to the secreted. Its function is as follows. Ion channel inhibitor. In Trittame loki (Brush-footed trapdoor spider), this protein is U17-barytoxin-Tl1a.